A 431-amino-acid polypeptide reads, in one-letter code: 3-phosphoshikimate 1-carboxyvinyltransferase (431 aa).

The 3-phosphoshikimate site is built by Lys21, Ser22, and Arg26. Lys21 serves as a coordination point for phosphoenolpyruvate. Residues Gly93 and Arg121 each coordinate phosphoenolpyruvate. 3-phosphoshikimate-binding residues include Ser166, Gln168, Ser192, Asp317, and Lys344. Position 168 (Gln168) interacts with phosphoenolpyruvate. Asp317 serves as the catalytic Proton acceptor. Residues Arg348 and Arg390 each contribute to the phosphoenolpyruvate site.

Belongs to the EPSP synthase family. As to quaternary structure, monomer.

The protein resides in the cytoplasm. The catalysed reaction is 3-phosphoshikimate + phosphoenolpyruvate = 5-O-(1-carboxyvinyl)-3-phosphoshikimate + phosphate. It functions in the pathway metabolic intermediate biosynthesis; chorismate biosynthesis; chorismate from D-erythrose 4-phosphate and phosphoenolpyruvate: step 6/7. Catalyzes the transfer of the enolpyruvyl moiety of phosphoenolpyruvate (PEP) to the 5-hydroxyl of shikimate-3-phosphate (S3P) to produce enolpyruvyl shikimate-3-phosphate and inorganic phosphate. The protein is 3-phosphoshikimate 1-carboxyvinyltransferase of Herpetosiphon aurantiacus (strain ATCC 23779 / DSM 785 / 114-95).